The chain runs to 187 residues: Large ribosomal subunit protein bL17 (187 aa).

Belongs to the bacterial ribosomal protein bL17 family. Part of the 50S ribosomal subunit. Contacts protein L32.

This Rhodococcus opacus (strain B4) protein is Large ribosomal subunit protein bL17.